Reading from the N-terminus, the 190-residue chain is Elongation factor P-like protein (190 aa).

It belongs to the elongation factor P family.

This is Elongation factor P-like protein from Pseudoalteromonas translucida (strain TAC 125).